The chain runs to 378 residues: Myoglobin (378 aa).

Alanine 2 carries the blocked amino end (Ala) modification. Residue histidine 332 participates in heme binding.

Belongs to the indoleamine 2,3-dioxygenase family. As to quaternary structure, homodimer. The cofactor is heme.

Functionally, serves a reserve supply of oxygen and facilitates the movement of oxygen within muscles. This Haliotis diversicolor (Abalone) protein is Myoglobin.